A 396-amino-acid polypeptide reads, in one-letter code: Gap junction gamma-1 protein (396 aa).

Over 1–22 (MSWSFLTRLLEEIHNHSTFVGK) the chain is Cytoplasmic. Residues 23 to 45 (IWLTVLIVFRIVLTAVGGESIYY) form a helical membrane-spanning segment. At 46-75 (DEQSKFVCNTEQPGCENVCYDAFAPLSHVR) the chain is on the extracellular side. Residues 76-95 (FWVFQIILVATPSVMYLGYA) traverse the membrane as a helical segment. Topologically, residues 96–175 (IHKIAKMEHG…RRIREDGLMK (80 aa)) are cytoplasmic. Positions 145–165 (ELESDKENKEQSQPKPKHDGR) are disordered. A compositionally biased stretch (basic and acidic residues) spans 147-156 (ESDKENKEQS). A helical membrane pass occupies residues 176–198 (IYVLQLLARTVFEVGFLIGQYFL). Topologically, residues 199–228 (YGFQVHPFYVCSRLPCPHKIDCFISRPTEK) are extracellular. Residues 229 to 248 (TIFLLIMYGVTGLCLLLNIW) traverse the membrane as a helical segment. Residues 249–396 (EMLHLGFGTI…SGDGKTSVWI (148 aa)) are Cytoplasmic-facing. The tract at residues 353–396 (VQAYSHQNNPHGPREKKAKVGSKAGSNKSTASSKSGDGKTSVWI) is disordered. Residues 376–387 (AGSNKSTASSKS) are compositionally biased toward polar residues.

It belongs to the connexin family. Gamma-type subfamily. In terms of assembly, a connexon is composed of a hexamer of connexins. Interacts with CNST.

The protein localises to the cell membrane. Its subcellular location is the cell junction. The protein resides in the gap junction. Functionally, one gap junction consists of a cluster of closely packed pairs of transmembrane channels, the connexons, through which materials of low MW diffuse from one cell to a neighboring cell. The polypeptide is Gap junction gamma-1 protein (GJC1) (Homo sapiens (Human)).